Reading from the N-terminus, the 255-residue chain is Hydroxyacylglutathione hydrolase (255 aa).

Residues H56, H58, D60, H61, H114, D133, and H171 each contribute to the Zn(2+) site.

The protein belongs to the metallo-beta-lactamase superfamily. Glyoxalase II family. As to quaternary structure, monomer. It depends on Zn(2+) as a cofactor.

The catalysed reaction is an S-(2-hydroxyacyl)glutathione + H2O = a 2-hydroxy carboxylate + glutathione + H(+). The protein operates within secondary metabolite metabolism; methylglyoxal degradation; (R)-lactate from methylglyoxal: step 2/2. In terms of biological role, thiolesterase that catalyzes the hydrolysis of S-D-lactoyl-glutathione to form glutathione and D-lactic acid. This chain is Hydroxyacylglutathione hydrolase, found in Nitrobacter winogradskyi (strain ATCC 25391 / DSM 10237 / CIP 104748 / NCIMB 11846 / Nb-255).